A 649-amino-acid polypeptide reads, in one-letter code: Protein mitoshell (649 aa).

The span at 167-176 (LRSEARKPRP) shows a compositional bias: basic and acidic residues. Disordered stretches follow at residues 167–193 (LRSEARKPRPESVVPEESSISSLESGA), 389–414 (HGPSAFSTPNNQIRNNAASKGQEPTS), and 485–512 (ALPSQEIPNAPTPKSSPQSDRPRDVRSY). The segment covering 177–191 (ESVVPEESSISSLES) has biased composition (low complexity). Composition is skewed to polar residues over residues 393 to 414 (AFSTPNNQIRNNAASKGQEPTS) and 485 to 503 (ALPSQEIPNAPTPKSSPQS).

Functionally, required for male meiotic cytokinesis through its involvement in the regulation of mitochondrial aggregation and fusion, astral spindle assembly and contractile ring formation. The polypeptide is Protein mitoshell (Drosophila melanogaster (Fruit fly)).